We begin with the raw amino-acid sequence, 167 residues long: LIM domain transcription factor LMO4.1 (167 aa).

Residues 1-17 (MVNNRVTESTTTAVSSN) are compositionally biased toward polar residues. Residues 1-20 (MVNNRVTESTTTAVSSNGGP) form a disordered region. 2 consecutive LIM zinc-binding domains span residues 22-84 (KACA…LFGS) and 86-148 (GACS…GLLS).

Its function is as follows. Acts as a positive cofactor of GATA transcription factors to establish the identity of the ventral mesoderm during gastrulation. Down-regulation in the dorsal mesoderm is necessary for the proper formation of this territory since, when present, lmo4 may bind ldb1 and restrict the availability of this cofactor for Spemman organizer transcription factors. At neurula stages, suppresses primary neuron differentiation and modulates gene expression at the Isthmic Organizer of the midbrain-hindbrain boundary. The protein is LIM domain transcription factor LMO4.1 (lmo4.1) of Xenopus tropicalis (Western clawed frog).